We begin with the raw amino-acid sequence, 341 residues long: RNA 3'-terminal phosphate cyclase (341 aa).

ATP is bound by residues Gln102 and His283 to Gln287. Catalysis depends on His308, which acts as the Tele-AMP-histidine intermediate.

Belongs to the RNA 3'-terminal cyclase family. Type 1 subfamily.

It localises to the cytoplasm. The enzyme catalyses a 3'-end 3'-phospho-ribonucleotide-RNA + ATP = a 3'-end 2',3'-cyclophospho-ribonucleotide-RNA + AMP + diphosphate. Functionally, catalyzes the conversion of 3'-phosphate to a 2',3'-cyclic phosphodiester at the end of RNA. The mechanism of action of the enzyme occurs in 3 steps: (A) adenylation of the enzyme by ATP; (B) transfer of adenylate to an RNA-N3'P to produce RNA-N3'PP5'A; (C) and attack of the adjacent 2'-hydroxyl on the 3'-phosphorus in the diester linkage to produce the cyclic end product. The biological role of this enzyme is unknown but it is likely to function in some aspects of cellular RNA processing. The polypeptide is RNA 3'-terminal phosphate cyclase (Pseudomonas aeruginosa (strain UCBPP-PA14)).